Reading from the N-terminus, the 300-residue chain is Junctional adhesion molecule A (300 aa).

The signal sequence occupies residues Met-1–Gly-26. The Extracellular segment spans residues Lys-27–Gly-238. Ig-like V-type domains lie at Gly-28–Ser-122 and Pro-134–Asp-230. N-linked (GlcNAc...) asparagine glycosylation occurs at Asn-42. Intrachain disulfides connect Cys-49–Cys-108 and Cys-152–Cys-212. A glycan (N-linked (GlcNAc...) asparagine) is linked at Asn-185. A helical membrane pass occupies residues Ile-239–Phe-259. Topologically, residues Ala-260–Leu-299 are cytoplasmic. Phosphoserine is present on residues Ser-282, Ser-285, and Ser-288.

This sequence belongs to the immunoglobulin superfamily. Interacts with the ninth PDZ domain of MPDZ. Interacts with the first PDZ domain of PARD3. The association between PARD3 and PARD6B probably disrupts this interaction. Interacts with ITGAL (via I-domain). Interacts with CD151.

The protein resides in the cell junction. Its subcellular location is the tight junction. It localises to the cell membrane. Functionally, seems to play a role in epithelial tight junction formation. Appears early in primordial forms of cell junctions and recruits PARD3. The association of the PARD6-PARD3 complex may prevent the interaction of PARD3 with JAM1, thereby preventing tight junction assembly. Plays a role in regulating monocyte transmigration involved in integrity of epithelial barrier. Ligand for integrin alpha-L/beta-2 involved in memory T-cell and neutrophil transmigration. Involved in platelet activation. The polypeptide is Junctional adhesion molecule A (F11r) (Mus musculus (Mouse)).